The sequence spans 55 residues: Large ribosomal subunit protein bL33 (55 aa).

Belongs to the bacterial ribosomal protein bL33 family.

The chain is Large ribosomal subunit protein bL33 from Chelativorans sp. (strain BNC1).